A 146-amino-acid chain; its full sequence is MTNSKNSSNNSTNGNELYAIAETSGQQFWFEVNRYYDIDRLNAKEKDKITLEKILLLKDKNSITIGKPYVKDAKIELEVVSHKRDKKILVYKMRPKKKTRRKMGHRQELTRVMVKSISLGKSAPKSSAKKETVKKETKPKSEKSTN.

The disordered stretch occupies residues 115 to 146 (KSISLGKSAPKSSAKKETVKKETKPKSEKSTN). Over residues 128 to 146 (AKKETVKKETKPKSEKSTN) the composition is skewed to basic and acidic residues.

The protein belongs to the bacterial ribosomal protein bL21 family. In terms of assembly, part of the 50S ribosomal subunit. Contacts protein L20.

In terms of biological role, this protein binds to 23S rRNA in the presence of protein L20. The sequence is that of Large ribosomal subunit protein bL21 from Prochlorococcus marinus (strain MIT 9312).